An 885-amino-acid chain; its full sequence is Cytosolic carboxypeptidase-like protein 5 (885 aa).

The region spanning 157-570 (YPFSYSDCQD…AMAIAALDMA (414 aa)) is the Peptidase M14 domain. The Zn(2+) site is built by His-252 and Glu-255. The disordered stretch occupies residues 343–402 (NSQSPSEHQHSSHLPPDAPLSDPEKADSLQNRAHLGRSSSGDKPEAWTQTEVAEQKPNSV). The span at 388–402 (AWTQTEVAEQKPNSV) shows a compositional bias: polar residues. His-434 is a Zn(2+) binding site. The active-site Proton donor/acceptor is Glu-516. Disordered regions lie at residues 605–733 (TTVN…LASS) and 783–839 (RLQA…PRPC). Polar residues predominate over residues 620-640 (PPRSNNGLPVSCSENTLSRAR). Low complexity-rich tracts occupy residues 641–666 (SFST…NSPS) and 714–733 (PTSS…LASS). Phosphoserine is present on Ser-840.

This sequence belongs to the peptidase M14 family. Zn(2+) is required as a cofactor.

Its subcellular location is the cytoplasm. The protein resides in the cytosol. It is found in the nucleus. The protein localises to the cytoskeleton. It localises to the spindle. Its subcellular location is the midbody. The catalysed reaction is gamma-L-glutamyl-L-glutamyl-[protein] + H2O = L-glutamyl-[protein] + L-glutamate. The enzyme catalyses (L-glutamyl)(n+1)-gamma-L-glutamyl-L-glutamyl-[protein] + H2O = (L-glutamyl)(n)-gamma-L-glutamyl-L-glutamyl-[protein] + L-glutamate. It carries out the reaction C-terminal L-alpha-aminoacyl-L-glutamyl-[tubulin] + H2O = C-terminal L-alpha-aminoacyl-[tubulin] + L-glutamate. It catalyses the reaction C-terminal L-alpha-aminoacyl-L-glutamyl-L-glutamyl-[tubulin] + H2O = C-terminal L-alpha-aminoacyl-L-glutamyl-[tubulin] + L-glutamate. Functionally, metallocarboxypeptidase that mediates deglutamylation of tubulin and non-tubulin target proteins. Catalyzes the removal of polyglutamate side chains present on the gamma-carboxyl group of glutamate residues within the C-terminal tail of alpha- and beta-tubulin. Cleaves alpha- and gamma-linked polyglutamate tubulin side-chain, as well as the branching point glutamate. Also catalyzes the removal of alpha-linked glutamate residues from the carboxy-terminus of alpha-tubulin. Mediates deglutamylation of nucleotidyltransferase CGAS, leading to CGAS antiviral defense response activation. This Bos taurus (Bovine) protein is Cytosolic carboxypeptidase-like protein 5 (AGBL5).